We begin with the raw amino-acid sequence, 288 residues long: Probable syndecan (288 aa).

The signal sequence occupies residues 1 to 26; sequence MILKLNFCLSTYSVLILLSLSTQAFA. Topologically, residues 27-231 are extracellular; it reads ANQAKTKVVP…ETLANGFYAA (205 aa). The interval 67–175 is disordered; sequence EVNGSGYPTD…NIHNDEDFFT (109 aa). N-linked (GlcNAc...) asparagine glycosylation occurs at Asn-69. O-linked (Xyl...) (glycosaminoglycan) serine glycosylation is found at Ser-71 and Ser-86. Polar residues predominate over residues 89 to 104; that stretch reads PPSSATTKSDKVTSPS. Residues 106–124 show a composition bias toward low complexity; that stretch reads AVVTAKPTTVPTTTASFKP. The segment covering 141-164 has biased composition (acidic residues); it reads VEEDEDDDEDEDEDDEDDEEDFAD. O-linked (Xyl...) (glycosaminoglycan) serine glycosylation occurs at Ser-214. A helical transmembrane segment spans residues 232 to 252; sequence IAGGVLVAVITAILLVLFVVF. The Cytoplasmic segment spans residues 253-288; it reads RIRKKDEGSYALDEPKQARPYASYGYTKASTKEFYA.

Belongs to the syndecan proteoglycan family.

The protein resides in the membrane. It is found in the cell surface. The protein localises to the cell junction. It localises to the cytoplasm. Functionally, cell surface proteoglycan that bears heparan sulfate. Required for correct mitotic spindle orientation of the ABar blastomere division plane and this may be through modulation of astral microtubule array, and in association with the wnt-signaling proteins mig-5 and dsh-2. Involved in the migration of AQR and PQR neurons, which descend from the Q neuroblasts. Promotes the axon guidance of D-type motor neurons. In Caenorhabditis elegans, this protein is Probable syndecan.